The chain runs to 294 residues: Small ribosomal subunit protein uS2 (294 aa).

Positions 261–274 (MDEDADSKKSKAEE) are enriched in basic and acidic residues. The tract at residues 261-294 (MDEDADSKKSKAEEPVIPTAEEPAITTIEVDQNE) is disordered.

It belongs to the universal ribosomal protein uS2 family.

The sequence is that of Small ribosomal subunit protein uS2 from Leptospira borgpetersenii serovar Hardjo-bovis (strain JB197).